The sequence spans 25 residues: Omega conotoxin-CVIF (25 aa).

Disulfide bonds link C1–C16, C8–C20, and C15–C25. Position 25 is a cysteine amide (C25).

This sequence belongs to the conotoxin O1 superfamily. As to expression, expressed by the venom duct.

Its subcellular location is the secreted. Omega-conotoxins act at presynaptic membranes, they bind and block voltage-gated calcium channels. This toxin blocks N-type calcium channels (Cav2.2/CACNA1B). It shows a higher potency when Cav2.2/CACNA1B is only expressed with the ancillary subunit CACNB3 (IC(50)=0.1 nM) than on Cav2.2/CACNA1B expressed with the ancillary subunits CACNA2D1 and CACNB3 (IC(50)=19.9 nM). The Cav2.2/CACNA1B block by this toxin is voltage-independent, whereas the recovery from toxin block is voltage-dependent. There is a low recovery at physiological membrane potential and a high recovery with hyperpolarized potential. This indicates that the toxin has a higher affinity for Cav2.2/CACNA1B in the inactivated state. It is noteworthy that ancillary subunits beta modulate recovery from this toxin block. Cav2.2/CACNA1B expressed with the ancillary subunit CACNB2a (isoform 2a) almost recover completely from this toxin block, whereas an expression with CACNB3 exhibits relatively weak recovery. Inhibition by this toxin of excitatory synaptic transmission is reversible. In vivo, when tested on rat model of persistent pain, this toxin blocks chronic pain behavior. This is Omega conotoxin-CVIF from Conus catus (Cat cone).